Here is a 115-residue protein sequence, read N- to C-terminus: NAD(P)H-quinone oxidoreductase subunit M, organellar chromatophore (115 aa).

Belongs to the complex I NdhM subunit family. As to quaternary structure, NDH-1 can be composed of about 15 different subunits; different subcomplexes with different compositions have been identified which probably have different functions.

Its subcellular location is the plastid. The protein resides in the organellar chromatophore thylakoid membrane. The catalysed reaction is a plastoquinone + NADH + (n+1) H(+)(in) = a plastoquinol + NAD(+) + n H(+)(out). It carries out the reaction a plastoquinone + NADPH + (n+1) H(+)(in) = a plastoquinol + NADP(+) + n H(+)(out). NDH-1 shuttles electrons from an unknown electron donor, via FMN and iron-sulfur (Fe-S) centers, to quinones in the respiratory and/or the photosynthetic chain. The immediate electron acceptor for the enzyme in this species is believed to be plastoquinone. Couples the redox reaction to proton translocation, and thus conserves the redox energy in a proton gradient. The chain is NAD(P)H-quinone oxidoreductase subunit M, organellar chromatophore from Paulinella chromatophora.